Here is a 284-residue protein sequence, read N- to C-terminus: Bifunctional protein FolD 1 (284 aa).

NADP(+)-binding positions include 166–168 (GAS) and Ile-232.

It belongs to the tetrahydrofolate dehydrogenase/cyclohydrolase family. Homodimer.

It catalyses the reaction (6R)-5,10-methylene-5,6,7,8-tetrahydrofolate + NADP(+) = (6R)-5,10-methenyltetrahydrofolate + NADPH. The enzyme catalyses (6R)-5,10-methenyltetrahydrofolate + H2O = (6R)-10-formyltetrahydrofolate + H(+). It functions in the pathway one-carbon metabolism; tetrahydrofolate interconversion. In terms of biological role, catalyzes the oxidation of 5,10-methylenetetrahydrofolate to 5,10-methenyltetrahydrofolate and then the hydrolysis of 5,10-methenyltetrahydrofolate to 10-formyltetrahydrofolate. In Ectopseudomonas mendocina (strain ymp) (Pseudomonas mendocina), this protein is Bifunctional protein FolD 1.